We begin with the raw amino-acid sequence, 626 residues long: DNA (cytosine-5)-methyltransferase DRM2 (626 aa).

UBA domains follow at residues 59–101 (GFSD…ISKY) and 109–150 (SSKS…LLSC). Positions 160–187 (VEEEDGIDWSSSDDDTNYTDMLNSDDEK) are enriched in acidic residues. Disordered stretches follow at residues 160 to 196 (VEEEDGIDWSSSDDDTNYTDMLNSDDEKDPNSNENGS) and 245 to 282 (TEHEEQKPRHNIKKRRFESKGEPRSSVDDEPIRLPNPM). The region spanning 190 to 232 (NSNENGSKIRSLVKMGFSELEASLAVERCGENVDIAELTDFLC) is the UBA 3 domain. Residues 262–276 (ESKGEPRSSVDDEPI) show a composition bias toward basic and acidic residues. Residues 295 to 626 (THRSLPELAR…EVVRARMRGS (332 aa)) form the SAM-dependent MTase DRM-type domain.

Belongs to the class I-like SAM-binding methyltransferase superfamily. DRM-methyltransferase family. As to quaternary structure, interacts with RDM1. Expressed in roots, inflorescences and at lower levels in leaves.

It is found in the nucleus. The protein resides in the nucleoplasm. It catalyses the reaction a 2'-deoxycytidine in DNA + S-adenosyl-L-methionine = a 5-methyl-2'-deoxycytidine in DNA + S-adenosyl-L-homocysteine + H(+). In terms of biological role, involved in de novo DNA methylation. Controls asymmetric and CpNpG methylation. Required for FWA gene silencing but not for the maintenance of SUP gene silencing. Functionally redundant to CMT3 to maintain non-CpG methylation. Involved in RNA-directed DNA methylation (RdDM). Acts as major DNA methyltransferase in the RdDM pathway, and is essential for RNA-directed de novo DNA methylation of cytosines in all sequence contexts. Associates with long non-coding RNA (lncRNA) produced by RNA polymerase V (Pol V). This association is dependent on AGO4 and IDN2, and results in DNA methylation of RdDM target loci. In Arabidopsis thaliana (Mouse-ear cress), this protein is DNA (cytosine-5)-methyltransferase DRM2 (DRM2).